The following is a 614-amino-acid chain: Dihydroxy-acid dehydratase (614 aa).

A Mg(2+)-binding site is contributed by aspartate 81. Cysteine 122 lines the [2Fe-2S] cluster pocket. Residues aspartate 123 and lysine 124 each contribute to the Mg(2+) site. Residue lysine 124 is modified to N6-carboxylysine. A [2Fe-2S] cluster-binding site is contributed by cysteine 195. Residue glutamate 491 coordinates Mg(2+). Residue serine 517 is the Proton acceptor of the active site.

This sequence belongs to the IlvD/Edd family. Homodimer. Requires [2Fe-2S] cluster as cofactor. Mg(2+) serves as cofactor.

The enzyme catalyses (2R)-2,3-dihydroxy-3-methylbutanoate = 3-methyl-2-oxobutanoate + H2O. The catalysed reaction is (2R,3R)-2,3-dihydroxy-3-methylpentanoate = (S)-3-methyl-2-oxopentanoate + H2O. It functions in the pathway amino-acid biosynthesis; L-isoleucine biosynthesis; L-isoleucine from 2-oxobutanoate: step 3/4. The protein operates within amino-acid biosynthesis; L-valine biosynthesis; L-valine from pyruvate: step 3/4. Its function is as follows. Functions in the biosynthesis of branched-chain amino acids. Catalyzes the dehydration of (2R,3R)-2,3-dihydroxy-3-methylpentanoate (2,3-dihydroxy-3-methylvalerate) into 2-oxo-3-methylpentanoate (2-oxo-3-methylvalerate) and of (2R)-2,3-dihydroxy-3-methylbutanoate (2,3-dihydroxyisovalerate) into 2-oxo-3-methylbutanoate (2-oxoisovalerate), the penultimate precursor to L-isoleucine and L-valine, respectively. The chain is Dihydroxy-acid dehydratase from Actinobacillus succinogenes (strain ATCC 55618 / DSM 22257 / CCUG 43843 / 130Z).